The chain runs to 306 residues: Protein-methionine-sulfoxide reductase catalytic subunit MsrP (306 aa).

Residues 1–44 (MLIRHAPDLTDNDVTGHGLYLRRRDFIGGAAGLGLMAAAGSASA) constitute a signal peptide (tat-type signal). Residues Asn-69, 72–73 (YE), Cys-127, Thr-162, Asn-210, Arg-215, and 226–228 (GIK) each bind Mo-molybdopterin.

The protein belongs to the MsrP family. In terms of assembly, heterodimer of a catalytic subunit (MsrP) and a heme-binding subunit (MsrQ). The cofactor is Mo-molybdopterin. In terms of processing, predicted to be exported by the Tat system. The position of the signal peptide cleavage has not been experimentally proven.

The protein localises to the periplasm. The catalysed reaction is L-methionyl-[protein] + a quinone + H2O = L-methionyl-(S)-S-oxide-[protein] + a quinol. It catalyses the reaction L-methionyl-[protein] + a quinone + H2O = L-methionyl-(R)-S-oxide-[protein] + a quinol. Functionally, part of the MsrPQ system that repairs oxidized periplasmic proteins containing methionine sulfoxide residues (Met-O), using respiratory chain electrons. Thus protects these proteins from oxidative-stress damage caused by reactive species of oxygen and chlorine generated by the host defense mechanisms. MsrPQ is essential for the maintenance of envelope integrity under bleach stress, rescuing a wide series of structurally unrelated periplasmic proteins from methionine oxidation. The catalytic subunit MsrP is non-stereospecific, being able to reduce both (R-) and (S-) diastereoisomers of methionine sulfoxide. This is Protein-methionine-sulfoxide reductase catalytic subunit MsrP from Caulobacter sp. (strain K31).